The following is an 883-amino-acid chain: DNA mismatch repair protein MutS (883 aa).

619–626 (GPNMGGKS) lines the ATP pocket.

The protein belongs to the DNA mismatch repair MutS family.

In terms of biological role, this protein is involved in the repair of mismatches in DNA. It is possible that it carries out the mismatch recognition step. This protein has a weak ATPase activity. The protein is DNA mismatch repair protein MutS of Marinomonas sp. (strain MWYL1).